The chain runs to 390 residues: Homoserine O-acetyltransferase (390 aa).

The AB hydrolase-1 domain maps to 55-366; sequence NAILINHAFS…ESDCGHDAFL (312 aa). Ser-163 (nucleophile) is an active-site residue. A substrate-binding site is contributed by Arg-232. Catalysis depends on residues Asp-329 and His-362. Asp-363 is a binding site for substrate.

It belongs to the AB hydrolase superfamily. MetX family. Homodimer.

It localises to the cytoplasm. It carries out the reaction L-homoserine + acetyl-CoA = O-acetyl-L-homoserine + CoA. Its pathway is amino-acid biosynthesis; L-methionine biosynthesis via de novo pathway; O-acetyl-L-homoserine from L-homoserine: step 1/1. Functionally, transfers an acetyl group from acetyl-CoA to L-homoserine, forming acetyl-L-homoserine. This Desulfotalea psychrophila (strain LSv54 / DSM 12343) protein is Homoserine O-acetyltransferase.